The following is a 709-amino-acid chain: Bud site selection protein 14 (709 aa).

At S2 the chain carries N-acetylserine. Residues 61 to 258 (DIINNRPTSG…DYQPLSPPRE (198 aa)) are disordered. Composition is skewed to polar residues over residues 62 to 74 (IINN…SKLT) and 89 to 107 (VTPT…NILS). Composition is skewed to basic and acidic residues over residues 111-123 (EKGH…RDDD) and 131-150 (VEKH…KENS). A Phosphotyrosine modification is found at Y159. Phosphoserine occurs at positions 160 and 162. T177 bears the Phosphothreonine mark. A phosphoserine mark is found at S212 and S222. A compositionally biased stretch (acidic residues) spans 212 to 226 (SEDEDEEENYSDDDD). One can recognise an SH3 domain in the interval 259 to 320 (LDPDKLYALY…PAEILETFPE (62 aa)). A disordered region spans residues 334-367 (SSQSVASSDSKDDSISSGNKNQSDAESIIPTPAL). Phosphoserine is present on residues S376, S378, and S401. Acidic residues predominate over residues 396-406 (DTSLDSNDDGG). 4 disordered regions span residues 396–421 (DTSL…DNDK), 464–510 (NVKK…SDYD), 525–571 (ANGM…SSRA), and 600–680 (ASLG…PASK). Positions 470 to 504 (RQDNKNESEPKTSSSKDREDDYNANRYVGQEKSEP) are enriched in basic and acidic residues. S507 carries the post-translational modification Phosphoserine. Residues 531-552 (SDSQNSLSTIGEFSPSSSEWTN) show a composition bias toward polar residues. The span at 553–569 (ESPSTPIVEESSSIPSS) shows a compositional bias: low complexity. Over residues 600–614 (ASLGSSGGMANQTDA) the composition is skewed to polar residues. Basic and acidic residues predominate over residues 615-633 (EQPKEELEKHHSTPEEEKQ). Phosphoserine occurs at positions 655, 658, and 670. Residues 655–671 (SSASINSSLSGSRALSN) show a composition bias toward low complexity.

In terms of assembly, interacts with GLC7.

Important for bud site selection. Seems to be a regulatory subunit of the BUD14-GLC7 type-I phosphatase complex. The BUD14-GLC7 complex is necessary to regulate microtubule dynamics at the cortex and may function as a specific activator of the dynein complex. The chain is Bud site selection protein 14 (BUD14) from Saccharomyces cerevisiae (strain ATCC 204508 / S288c) (Baker's yeast).